Reading from the N-terminus, the 1958-residue chain is Callose synthase 7 (1958 aa).

The interval 1 to 29 (MASTSSGGRGEDGRPPQMQPVRSMSRKMT) is disordered. Residues 1 to 504 (MASTSSGGRG…LYRSFDRMWM (504 aa)) are Cytoplasmic-facing. A helical membrane pass occupies residues 505–525 (FLVLSLQTMIIVAWHPSGSIL). Over 526-535 (AIFTEDVFRN) the chain is Extracellular. Residues 536–556 (VLTIFITSAFLNLLQATLDLV) form a helical membrane-spanning segment. The Cytoplasmic segment spans residues 557–569 (LSFGAWKSLKFSQ). A helical membrane pass occupies residues 570–590 (IMRYITKFLMAAMWAIMLPIT). At 591-620 (YSKSVQNPTGLIKFFSSWVGSWLHRSLYDY) the chain is on the extracellular side. A helical membrane pass occupies residues 621–641 (AIALYVLPNILAAVFFLLPPL). Topologically, residues 642 to 673 (RRIMERSNMRIVTLIMWWAQPKLYIGRGMHEE) are cytoplasmic. The chain crosses the membrane as a helical span at residues 674-694 (MFALFKYTFFWVMLLLSKLAF). Residues 695–730 (SYYVEILPLVNPTKLIWDMHVVNYEWHEFFPNATHN) are Extracellular-facing. Residues 731 to 751 (IGVIIAIWGPIVLVYFMDTQI) traverse the membrane as a helical segment. Residues 752-1496 (WYAIFSTLFG…FDFYRMLSFY (745 aa)) are Cytoplasmic-facing. Residues 1497–1517 (FTTVGFYFSSMITVLTVYVFL) form a helical membrane-spanning segment. At 1518–1547 (YGRLYLVLSGLEKNILQSASVHESNALEQA) the chain is on the extracellular side. Residues 1548-1568 (LAAQSVFQLGFLMVLPMVMEI) form a helical membrane-spanning segment. Residues 1569–1576 (GLEKGFRT) are Cytoplasmic-facing. The chain crosses the membrane as a helical span at residues 1577–1597 (ALGDFIIMQLQLASVFFTFQL). The Extracellular portion of the chain corresponds to 1598 to 1640 (GTKAHYFGRTILHGGSKYRATGRGFVVFHAKFAENYRLYSRSH). A helical membrane pass occupies residues 1641 to 1661 (FVKGLELVILLVVYQVYGTSY). Residues 1662 to 1667 (RSSSTY) are Cytoplasmic-facing. Residues 1668-1688 (MYITFSMWFLVTSWLFAPFIF) form a helical membrane-spanning segment. Residues 1689–1742 (NPSGFEWQKTVDDWTDWKRWMGNRGGIGIVLDKSWESWWDIEQEHLKHTNLRGR) are Extracellular-facing. A helical transmembrane segment spans residues 1743 to 1763 (VLEILLALRFLLYQYGIVYHL). At 1764 to 1771 (NIARRHTT) the chain is on the cytoplasmic side. A helical transmembrane segment spans residues 1772 to 1792 (FLVYGLSWAILLSVLLVLKMV). Topologically, residues 1793–1812 (SMGRRKFGTDFQVMFRILKA) are extracellular. A helical membrane pass occupies residues 1813–1833 (LLFLGFLSVMTVLFVVCGLTI). The Cytoplasmic segment spans residues 1834–1835 (SD). Residues 1836–1856 (LFASILAFLPTGWAILLIGQA) form a helical membrane-spanning segment. Residues 1857–1878 (LRSVFKGLGFWDSVKELGRAYE) are Extracellular-facing. The chain crosses the membrane as a helical span at residues 1879–1899 (YIMGLVIFTPIAVLSWFPFVS). Over 1900–1958 (EFQTRLLFNQAFSRGLQISMILAGKKDKETPSTKYLGHTEESFGLEHDTNTFNHYYLWT) the chain is Cytoplasmic.

Belongs to the glycosyltransferase 48 family.

It is found in the cell membrane. The enzyme catalyses [(1-&gt;3)-beta-D-glucosyl](n) + UDP-alpha-D-glucose = [(1-&gt;3)-beta-D-glucosyl](n+1) + UDP + H(+). In terms of biological role, involved in callose synthesis at the forming cell plate during cytokinesis. During plant growth and development, callose is found as a transitory component of the cell plate in dividing cells, is a major component of pollen mother cell walls and pollen tubes, and is found as a structural component of plasmodesmatal canals. The sequence is that of Callose synthase 7 (CALS7) from Arabidopsis thaliana (Mouse-ear cress).